Here is a 104-residue protein sequence, read N- to C-terminus: Large ribosomal subunit protein bL21 (104 aa).

Belongs to the bacterial ribosomal protein bL21 family. In terms of assembly, part of the 50S ribosomal subunit. Contacts protein L20.

Its function is as follows. This protein binds to 23S rRNA in the presence of protein L20. This chain is Large ribosomal subunit protein bL21, found in Francisella philomiragia subsp. philomiragia (strain ATCC 25017 / CCUG 19701 / FSC 153 / O#319-036).